Here is a 225-residue protein sequence, read N- to C-terminus: Ribosome maturation factor RimM (225 aa).

The PRC barrel domain occupies 144–225 (ADEFYWVDLI…RIVVDWEADY (82 aa)).

It belongs to the RimM family. In terms of assembly, binds ribosomal protein uS19.

Its subcellular location is the cytoplasm. An accessory protein needed during the final step in the assembly of 30S ribosomal subunit, possibly for assembly of the head region. Essential for efficient processing of 16S rRNA. May be needed both before and after RbfA during the maturation of 16S rRNA. It has affinity for free ribosomal 30S subunits but not for 70S ribosomes. In Burkholderia lata (strain ATCC 17760 / DSM 23089 / LMG 22485 / NCIMB 9086 / R18194 / 383), this protein is Ribosome maturation factor RimM.